The primary structure comprises 473 residues: Serine incorporator 3 (473 aa).

Topologically, residues 1–96 are extracellular; the sequence is MGAVLGVFSL…KDCDVLVGYK (96 aa). N34 is a glycosylation site (N-linked (GlcNAc...) asparagine). The chain crosses the membrane as a helical span at residues 97 to 117; it reads AVYRISFAMAIFFFVFSLLMF. Over 118–132 the chain is Cytoplasmic; the sequence is KVKTSKDLRAAVHNG. The chain crosses the membrane as a helical span at residues 133 to 153; that stretch reads FWFFKIAALIGIMVGSFYIPG. Residues 154–159 lie on the Extracellular side of the membrane; that stretch reads GYFSSV. A helical membrane pass occupies residues 160–180; sequence WFVVGMIGAALFILIQLVLLV. Residues 181–203 lie on the Cytoplasmic side of the membrane; the sequence is DFAHSWNESWVNRMEEGNPRLWY. Residues 204–224 traverse the membrane as a helical segment; that stretch reads AALLSFTSAFYILSIICVGLL. Over 225–239 the chain is Extracellular; that stretch reads YTYYTKPDGCTENKF. Residues 240 to 260 traverse the membrane as a helical segment; that stretch reads FISINLILCVVASIISIHPKI. Topologically, residues 261 to 329 are cytoplasmic; the sequence is QEHQPRSGLL…VPTPTPPSKS (69 aa). A helical transmembrane segment spans residues 330–350; that stretch reads GSLLDSDNFIGLFVFVLCLLY. Residues 351–406 lie on the Extracellular side of the membrane; that stretch reads SSIRTSTNSQVDKLTLSGSDSVILGDTTTSGASDEEDGQPRRAVDNEKEGVQYSYS. The residue at position 371 (S371) is a Phosphoserine. Residues 407 to 427 traverse the membrane as a helical segment; that stretch reads LFHLMLCLASLYIMMTLTSWY. Topologically, residues 428-446 are cytoplasmic; it reads SPDAKFQSMTSKWPAVWVK. Residues 447-467 form a helical membrane-spanning segment; that stretch reads ISSSWVCLLLYVWTLVAPLVL. Over 468–473 the chain is Extracellular; the sequence is TSRDFS.

The protein belongs to the TDE1 family. In terms of processing, N-glycosylated. As to expression, ubiquitous. Expression levels were increased fourfold to tenfold in lung tumor tissues compared with normal pulmonary tissues.

The protein resides in the cell membrane. Its subcellular location is the golgi apparatus membrane. The protein localises to the cytoplasm. It is found in the perinuclear region. It catalyses the reaction a 1,2-diacyl-sn-glycero-3-phospho-L-serine(in) = a 1,2-diacyl-sn-glycero-3-phospho-L-serine(out). The enzyme catalyses a 1,2-diacyl-sn-glycero-3-phosphocholine(in) = a 1,2-diacyl-sn-glycero-3-phosphocholine(out). The catalysed reaction is a 1,2-diacyl-sn-glycero-3-phosphoethanolamine(in) = a 1,2-diacyl-sn-glycero-3-phosphoethanolamine(out). Functionally, restriction factor required to restrict infectivity of lentiviruses, such as HIV-1: acts by inhibiting an early step of viral infection. Impairs the penetration of the viral particle into the cytoplasm. Non-ATP-dependent, non-specific lipid transporter for phosphatidylserine, phosphatidylcholine, and phosphatidylethanolamine. Functions as a scramblase that flips lipids in both directions across the membrane. Phospholipid scrambling results in HIV-1 surface exposure of phosphatidylserine and loss of membrane asymmetry, which leads to changes in HIV-1 Env conformation and loss of infectivity. The polypeptide is Serine incorporator 3 (Homo sapiens (Human)).